The primary structure comprises 175 residues: ATP synthase subunit delta (175 aa).

The protein belongs to the ATPase delta chain family. As to quaternary structure, F-type ATPases have 2 components, F(1) - the catalytic core - and F(0) - the membrane proton channel. F(1) has five subunits: alpha(3), beta(3), gamma(1), delta(1), epsilon(1). F(0) has three main subunits: a(1), b(2) and c(10-14). The alpha and beta chains form an alternating ring which encloses part of the gamma chain. F(1) is attached to F(0) by a central stalk formed by the gamma and epsilon chains, while a peripheral stalk is formed by the delta and b chains.

It localises to the cell inner membrane. Functionally, f(1)F(0) ATP synthase produces ATP from ADP in the presence of a proton or sodium gradient. F-type ATPases consist of two structural domains, F(1) containing the extramembraneous catalytic core and F(0) containing the membrane proton channel, linked together by a central stalk and a peripheral stalk. During catalysis, ATP synthesis in the catalytic domain of F(1) is coupled via a rotary mechanism of the central stalk subunits to proton translocation. In terms of biological role, this protein is part of the stalk that links CF(0) to CF(1). It either transmits conformational changes from CF(0) to CF(1) or is implicated in proton conduction. In Xanthomonas campestris pv. campestris (strain 8004), this protein is ATP synthase subunit delta.